The primary structure comprises 859 residues: DNA mismatch repair protein MutS (859 aa).

Position 618 to 625 (618 to 625) interacts with ATP; sequence GPNMGGKS.

This sequence belongs to the DNA mismatch repair MutS family.

Its function is as follows. This protein is involved in the repair of mismatches in DNA. It is possible that it carries out the mismatch recognition step. This protein has a weak ATPase activity. The chain is DNA mismatch repair protein MutS from Shewanella sediminis (strain HAW-EB3).